The chain runs to 346 residues: Holliday junction branch migration complex subunit RuvB (346 aa).

Positions 1–182 (MSERLVTSNE…FGVLCSMEYY (182 aa)) are large ATPase domain (RuvB-L). ATP-binding positions include L21, R22, G63, K66, T67, T68, 129 to 131 (EDY), R172, Y182, and R219. Mg(2+) is bound at residue T67. Residues 183–253 (TDEQLKEIII…AAKKSLEILE (71 aa)) form a small ATPAse domain (RuvB-S) region. Residues 256-346 (GEGFDRIDNK…DSKQCTLFEK (91 aa)) form a head domain (RuvB-H) region. 2 residues coordinate DNA: R311 and R316.

This sequence belongs to the RuvB family. In terms of assembly, homohexamer. Forms an RuvA(8)-RuvB(12)-Holliday junction (HJ) complex. HJ DNA is sandwiched between 2 RuvA tetramers; dsDNA enters through RuvA and exits via RuvB. An RuvB hexamer assembles on each DNA strand where it exits the tetramer. Each RuvB hexamer is contacted by two RuvA subunits (via domain III) on 2 adjacent RuvB subunits; this complex drives branch migration. In the full resolvosome a probable DNA-RuvA(4)-RuvB(12)-RuvC(2) complex forms which resolves the HJ.

It localises to the cytoplasm. The catalysed reaction is ATP + H2O = ADP + phosphate + H(+). The RuvA-RuvB-RuvC complex processes Holliday junction (HJ) DNA during genetic recombination and DNA repair, while the RuvA-RuvB complex plays an important role in the rescue of blocked DNA replication forks via replication fork reversal (RFR). RuvA specifically binds to HJ cruciform DNA, conferring on it an open structure. The RuvB hexamer acts as an ATP-dependent pump, pulling dsDNA into and through the RuvAB complex. RuvB forms 2 homohexamers on either side of HJ DNA bound by 1 or 2 RuvA tetramers; 4 subunits per hexamer contact DNA at a time. Coordinated motions by a converter formed by DNA-disengaged RuvB subunits stimulates ATP hydrolysis and nucleotide exchange. Immobilization of the converter enables RuvB to convert the ATP-contained energy into a lever motion, pulling 2 nucleotides of DNA out of the RuvA tetramer per ATP hydrolyzed, thus driving DNA branch migration. The RuvB motors rotate together with the DNA substrate, which together with the progressing nucleotide cycle form the mechanistic basis for DNA recombination by continuous HJ branch migration. Branch migration allows RuvC to scan DNA until it finds its consensus sequence, where it cleaves and resolves cruciform DNA. This chain is Holliday junction branch migration complex subunit RuvB, found in Clostridium perfringens (strain ATCC 13124 / DSM 756 / JCM 1290 / NCIMB 6125 / NCTC 8237 / Type A).